A 460-amino-acid polypeptide reads, in one-letter code: Bifunctional protein GlmU (460 aa).

Residues 1–237 (MSSNQYTAGA…DPDLLGVNTP (237 aa)) form a pyrophosphorylase region. Residues 13 to 16 (LAAG), Lys-27, Gln-78, and 83 to 84 (GT) each bind UDP-N-acetyl-alpha-D-glucosamine. Residue Asp-109 participates in Mg(2+) binding. Gly-146, Glu-160, Asn-177, and Asn-235 together coordinate UDP-N-acetyl-alpha-D-glucosamine. A Mg(2+)-binding site is contributed by Asn-235. A linker region spans residues 238 to 258 (AELMRSEELLRENIVTRHLHN). The tract at residues 259–460 (GVHVHAAGSV…QKNLRKTRHS (202 aa)) is N-acetyltransferase. 2 residues coordinate UDP-N-acetyl-alpha-D-glucosamine: Arg-341 and Lys-359. His-371 serves as the catalytic Proton acceptor. UDP-N-acetyl-alpha-D-glucosamine is bound by residues Tyr-374 and Asn-385. Residues Ala-388, 394 to 395 (NY), Ser-413, Ala-431, and Arg-448 contribute to the acetyl-CoA site.

It in the N-terminal section; belongs to the N-acetylglucosamine-1-phosphate uridyltransferase family. The protein in the C-terminal section; belongs to the transferase hexapeptide repeat family. Homotrimer. Mg(2+) is required as a cofactor.

Its subcellular location is the cytoplasm. It carries out the reaction alpha-D-glucosamine 1-phosphate + acetyl-CoA = N-acetyl-alpha-D-glucosamine 1-phosphate + CoA + H(+). The catalysed reaction is N-acetyl-alpha-D-glucosamine 1-phosphate + UTP + H(+) = UDP-N-acetyl-alpha-D-glucosamine + diphosphate. It functions in the pathway nucleotide-sugar biosynthesis; UDP-N-acetyl-alpha-D-glucosamine biosynthesis; N-acetyl-alpha-D-glucosamine 1-phosphate from alpha-D-glucosamine 6-phosphate (route II): step 2/2. It participates in nucleotide-sugar biosynthesis; UDP-N-acetyl-alpha-D-glucosamine biosynthesis; UDP-N-acetyl-alpha-D-glucosamine from N-acetyl-alpha-D-glucosamine 1-phosphate: step 1/1. The protein operates within bacterial outer membrane biogenesis; LPS lipid A biosynthesis. Catalyzes the last two sequential reactions in the de novo biosynthetic pathway for UDP-N-acetylglucosamine (UDP-GlcNAc). The C-terminal domain catalyzes the transfer of acetyl group from acetyl coenzyme A to glucosamine-1-phosphate (GlcN-1-P) to produce N-acetylglucosamine-1-phosphate (GlcNAc-1-P), which is converted into UDP-GlcNAc by the transfer of uridine 5-monophosphate (from uridine 5-triphosphate), a reaction catalyzed by the N-terminal domain. This chain is Bifunctional protein GlmU, found in Oleidesulfovibrio alaskensis (strain ATCC BAA-1058 / DSM 17464 / G20) (Desulfovibrio alaskensis).